A 370-amino-acid polypeptide reads, in one-letter code: Protein maelstrom 2 (370 aa).

The segment at residues 2–68 (AQNKPNAFMA…VLERESKTER (67 aa)) is a DNA-binding region (HMG box).

Belongs to the maelstrom family.

Its subcellular location is the cytoplasm. It is found in the nucleus. Involved both in the piRNA and miRNA metabolic processes. As a component of the meiotic nuage, plays a central role during oogenesis by repressing transposable elements and preventing their mobilization, which is essential for the germline integrity. Repression of transposable elements is mediated via the piRNA metabolic process, which mediates the repression of transposable elements during meiosis by forming complexes composed of piRNAs and Piwi proteins and governs the repression of transposons. As a nuclear component, it is required for proper differentiation in the germline stem cell (GSC) lineage by repressing microRNA-7 (miR-7), thereby acting as an indirect regulator of bag-of-marbles (Bam). Acts by binding to the promoter of miR-7 gene and repressing its expression; miR-7 repression alleviates the Bam repression by miR-7, thereby allowing differentiation in the germline stem cell (GSC) lineage. In Drosophila pseudoobscura pseudoobscura (Fruit fly), this protein is Protein maelstrom 2 (mael2).